A 465-amino-acid chain; its full sequence is Glutamate--tRNA ligase (465 aa).

Residues 8–18 (PSPTGHLHIGG) carry the 'HIGH' region motif. Positions 97, 99, 124, and 126 each coordinate Zn(2+). The short motif at 234-238 (RLSKR) is the 'KMSKS' region element. Residue K237 participates in ATP binding.

The protein belongs to the class-I aminoacyl-tRNA synthetase family. Glutamate--tRNA ligase type 1 subfamily. Monomer. The cofactor is Zn(2+).

It is found in the cytoplasm. It catalyses the reaction tRNA(Glu) + L-glutamate + ATP = L-glutamyl-tRNA(Glu) + AMP + diphosphate. Its function is as follows. Catalyzes the attachment of glutamate to tRNA(Glu) in a two-step reaction: glutamate is first activated by ATP to form Glu-AMP and then transferred to the acceptor end of tRNA(Glu). This Thermodesulfovibrio yellowstonii (strain ATCC 51303 / DSM 11347 / YP87) protein is Glutamate--tRNA ligase.